The primary structure comprises 284 residues: Cuticle collagen dpy-5 (284 aa).

The tract at residues 88–284 is disordered; the sequence is GLPSQGCPAG…PCPERKRRRV (197 aa). 2 triple-helical region regions span residues 94 to 126 and 143 to 270; these read CPAG…PGLN and GPPG…VGAD. Positions 106–115 are enriched in gly residues; sequence GEPGGTGPDG. The span at 163–177 shows a compositional bias: basic and acidic residues; that stretch reads AGKRGTPGKDGEPGR. 3 stretches are compositionally biased toward low complexity: residues 181–193, 224–246, and 255–271; these read IGDQ…DGQP, EPGN…TGQP, and DGTP…GADA.

Belongs to the cuticular collagen family. As to quaternary structure, collagen polypeptide chains are complexed within the cuticle by disulfide bonds and other types of covalent cross-links. Post-translationally, may be a substrate of bli-4.

Its function is as follows. Nematode cuticles are composed largely of collagen-like proteins. The cuticle functions both as an exoskeleton and as a barrier to protect the worm from its environment. The sequence is that of Cuticle collagen dpy-5 (dpy-5) from Caenorhabditis elegans.